A 307-amino-acid polypeptide reads, in one-letter code: MGAFPPPIDPSYIPSVSLTRLPATAPTADIIATLERDGALILVDLVSPQDVAAINAEIEPYIQKARAESHEAYDLIPKQTIMVPGVVGKSPTMARMAELDVIDTLRTRVLQRKCTATWEDRTEDFSIDPLLNSSLTYHISYGGPRQRLHRDDMIHGIYHRGGEYRLSDETMLGFMIAGSKTTRENGATMAIPGSHKWDHARVPRVDEVCFAEMEPGSALVFLGTVYHGAGHNSVPDQVRKIYGLFFIPGTLRPEENQFLAIPRSKVLGMSDKMLSLLGYKKPGTWLGIVNNGDPAENLAEVLGMANS.

Positions 149, 151, and 227 each coordinate Fe cation.

This sequence belongs to the PhyH family. In terms of assembly, homodimer. The cofactor is Fe cation.

It participates in mycotoxin biosynthesis. In terms of biological role, dioxygenase; part of the gene cluster that mediates the biosynthesis of swainsonine (SW), a cytotoxic fungal alkaloid and a potential cancer therapy drug. Swainsonine production occurs via a multibranched pathway and is dispensable for fungal colonization of plants and infection of insect hosts. The first step of swainsonine biosynthesis is the production of the precursor pipecolic acid (PA) via conversion of L-lysine (Lys) to 1-piperideine-6-carboxylate (P6C) by the aminotransferase swnA, the latter being further reduced to PA by the reductase swnR. PA can be converted from lysine by both the SW biosynthetic cluster and the unclustered genes such as lysine cyclodeaminase. The PKS-NRPS hybrid synthetase swnK uptakes and condensates PA and malonyl-CoA with and without skipping of the ketoreductase (KR) domain in order to produce 3 intermediates, 1-oxoindolizidine, (1S)-1-hydroxyindolizin, and (1R)-1-hydroxyindolizine; with the transisomer (1S)-1-hydroxyindolizin being predominant. The terminal thioester reductase (TE) domain of swnK is involved in reduction of the thioester bond to release the intermediate aldehydes. The oxidoreductase swnN could contribute to the reduction of 1-oxoindolizidine to (1S)-1-hydroxyindolizin and (1R)-1-hydroxyindolizine, contributing to the major route of SW production. The dioxygenase swnH2 would be responsible for the oxidization of (1R)-1-hydroxyindolizine into (1R,2S)-1,2-dihydroxyindolizine and of (1S)-1-hydroxyindolizin to yield both (1R,2S)-1,2-dihydroxyindolizine and (1S,2S)-1,2-dihydroxyindolizine. The dioxygenase swnH1 then performs the conversion of the 1,2-dihydroxyindolizine epimers to SW. The sequence is that of Dioxygenase swnH1 from Metarhizium robertsii (strain ARSEF 23 / ATCC MYA-3075) (Metarhizium anisopliae (strain ARSEF 23)).